Reading from the N-terminus, the 598-residue chain is MADKGTENFDLEGSSWYIVHEAECTDSIDTLEDLCDESDSNVSNLIDDDVVDQGNSLALYNAKITDDCDNAIAHLKRKYNKSPEQAVAELSPQLQAVKITPERNSKRRLFQEDSGIFEDEAENSLTQVESNSQTGGNSQDGGGDINLLLLQTSNRRATMLAKFKDWYGVSYNEITRVYKSDKSCSDNWVIVIFRAAVEVLESSKIVLQQHCTYIQVKIFGFSALYLLQFKSAKSRETVQKLMCSMLNIQEFQILTDPPKLRSVPTALYFYKQAMLTESFVFGQTPDWIAKQTLVSHQAATTAETFELSKMVQWAYDNNLLEECDIAYHYAMYADEDANAAAYLKSNNQVKHVRDCSTMVRMYKRYEMRDMSMSEWIYKCCDECTEEGDWKPISQFLKYQGVNILSFLIVLKSFLKGIPKKNCIVIHGPPDTGKSLFCYSLVKFLKGKVVSYVNRSSHFWLQPLMDCKVGFMDDATYVCWTYIDQNLRNALDGNPMCIDAKHRAPQQLKLPPMLITSNIDVKQEQSLMYLHSRVQCFSFPNKMPFLDDGSPMYTFTDATWKSFFQKLGRQLELTDPEEESNGVPSRAFRCTSRSNSDSY.

The short motif at 76-78 (KRK) is the Nuclear localization signal element. Residues serine 82 and serine 91 each carry the phosphoserine; by host modification. Residues 90–99 (LSPQLQAVKI) carry the Nuclear export signal motif. The segment at 138–302 (SQDGGGDINL…LVSHQAATTA (165 aa)) is DNA-binding region. Positions 401-551 (VNILSFLIVL…MPFLDDGSPM (151 aa)) constitute an SF3 helicase domain. 427–434 (GPPDTGKS) provides a ligand contact to ATP. Residue lysine 508 forms a Glycyl lysine isopeptide (Lys-Gly) (interchain with G-Cter in SUMO) linkage. Residues 573-598 (TDPEEESNGVPSRAFRCTSRSNSDSY) form a disordered region.

It belongs to the papillomaviridae E1 protein family. Can form hexamers. Interacts with E2 protein; this interaction increases E1 DNA binding specificity. Interacts with host DNA polymerase subunit POLA2. Interacts with host single stranded DNA-binding protein RPA1. Interacts with host TOP1; this interaction stimulates the enzymatic activity of TOP1. Phosphorylated. In terms of processing, sumoylated.

Its subcellular location is the host nucleus. The catalysed reaction is Couples ATP hydrolysis with the unwinding of duplex DNA by translocating in the 3'-5' direction.. It carries out the reaction ATP + H2O = ADP + phosphate + H(+). ATP-dependent DNA 3'-5' helicase required for initiation of viral DNA replication. It forms a complex with the viral E2 protein. The E1-E2 complex binds to the replication origin which contains binding sites for both proteins. During the initial step, a dimer of E1 interacts with a dimer of protein E2 leading to a complex that binds the viral origin of replication with high specificity. Then, a second dimer of E1 displaces the E2 dimer in an ATP-dependent manner to form the E1 tetramer. Following this, two E1 monomers are added to each half of the site, which results in the formation of two E1 trimers on the viral ori. Subsequently, two hexamers will be created. The double hexamer acts as a bi-directional helicase machinery and unwinds the viral DNA and then recruits the host DNA polymerase to start replication. The polypeptide is Replication protein E1 (Human papillomavirus 65).